The following is a 309-amino-acid chain: MPIKIPENLPAAEVLREENIFIMTEERAAHQDIRPLEIVILNLMPNKIVTETQLLRLLGNTPLQINVVLLRMVSHSHKNVSQEYLDTFYKSFDQISHRKFDGLIITGAPVETLDFEQVDYWEELKEVMDWSKKNVFSTLHICWGAQAGLYYHYGINKYHVSKKIFGVFEHSVSCEDSPLVRGFDDTFWVPHSRHTQIKREDIEPIKELMILSESKKAGVYLVERKDGRQVFVTGHPEYDPEVLKKEYYRDLKKGMDIDIPVNYFPHDDPEKRPVVRWRSHAYILFNNWLNYYVYQQTPYNLDNIDQAIL.

The Acyl-thioester intermediate role is filled by Cys142. The substrate site is built by Lys163 and Ser192. His235 (proton acceptor) is an active-site residue. Residue Glu237 is part of the active site. Substrate is bound at residue Arg249.

Belongs to the MetA family.

The protein resides in the cytoplasm. It catalyses the reaction L-homoserine + acetyl-CoA = O-acetyl-L-homoserine + CoA. Its pathway is amino-acid biosynthesis; L-methionine biosynthesis via de novo pathway; O-acetyl-L-homoserine from L-homoserine: step 1/1. In terms of biological role, transfers an acetyl group from acetyl-CoA to L-homoserine, forming acetyl-L-homoserine. The sequence is that of Homoserine O-acetyltransferase from Petrotoga mobilis (strain DSM 10674 / SJ95).